Consider the following 938-residue polypeptide: Isoleucine--tRNA ligase (938 aa).

Positions 58-68 match the 'HIGH' region motif; that stretch reads PYANGSIHIGH. Residue Lys-183 is modified to N6-acetyllysine. Glu-561 provides a ligand contact to L-isoleucyl-5'-AMP. Residues 602–606 carry the 'KMSKS' region motif; the sequence is KMSKS. An ATP-binding site is contributed by Lys-605. Positions 901, 904, 921, and 924 each coordinate Zn(2+).

Belongs to the class-I aminoacyl-tRNA synthetase family. IleS type 1 subfamily. In terms of assembly, monomer. Zn(2+) serves as cofactor.

Its subcellular location is the cytoplasm. The catalysed reaction is tRNA(Ile) + L-isoleucine + ATP = L-isoleucyl-tRNA(Ile) + AMP + diphosphate. Functionally, catalyzes the attachment of isoleucine to tRNA(Ile). As IleRS can inadvertently accommodate and process structurally similar amino acids such as valine, to avoid such errors it has two additional distinct tRNA(Ile)-dependent editing activities. One activity is designated as 'pretransfer' editing and involves the hydrolysis of activated Val-AMP. The other activity is designated 'posttransfer' editing and involves deacylation of mischarged Val-tRNA(Ile). This chain is Isoleucine--tRNA ligase, found in Escherichia coli (strain ATCC 8739 / DSM 1576 / NBRC 3972 / NCIMB 8545 / WDCM 00012 / Crooks).